The primary structure comprises 58 residues: Keratin-associated protein 19-6 (58 aa).

Belongs to the KRTAP type 19 family. Interacts with hair keratins.

In the hair cortex, hair keratin intermediate filaments are embedded in an interfilamentous matrix, consisting of hair keratin-associated proteins (KRTAP), which are essential for the formation of a rigid and resistant hair shaft through their extensive disulfide bond cross-linking with abundant cysteine residues of hair keratins. The matrix proteins include the high-sulfur and high-glycine-tyrosine keratins. This chain is Keratin-associated protein 19-6 (KRTAP19-6), found in Homo sapiens (Human).